The following is an 86-amino-acid chain: Protein P17 (86 aa).

The tract at residues 63–86 (SPAEKPDNQPELTGITFEGDNNDQ) is disordered.

Homotetramer.

In terms of biological role, assembly protein that acts late in phage assembly, after capsid protein folding and multimerization, and sorting of membrane proteins has occurred. The major coat protein P3 and two assembly factors (P10 and P17) are needed during the assembly of the virus particle inside the host cell, when the capsid protein multimers are capable of enclosing the host-derived membrane, containing the virus-encoded membrane-associated proteins. The polypeptide is Protein P17 (XVII) (Enterobacteria phage PRD1 (Bacteriophage PRD1)).